The chain runs to 228 residues: MKSTRPFHPTPVITIDGPTASGKGTVAALVAAHLGFHLLDSGALYRLAALASVRYGIAAEDIDALVKLIDDLHITFREGCAQLDGVDVSNDIRAEAVGNRASAIAVHGPVRSALVARQRAFRKTPGLVADGRDMGTVIFPDAVLKVFLTASAEARAARRHKQLMQKGFSANIDDLLRDLRERDARDSNRAAAPLKPAADAELLDTSALSVDEAVDQVLQWYRALGQPA.

17–25 (GPTASGKGT) is a binding site for ATP.

It belongs to the cytidylate kinase family. Type 1 subfamily.

It localises to the cytoplasm. It carries out the reaction CMP + ATP = CDP + ADP. The catalysed reaction is dCMP + ATP = dCDP + ADP. The chain is Cytidylate kinase from Burkholderia ambifaria (strain ATCC BAA-244 / DSM 16087 / CCUG 44356 / LMG 19182 / AMMD) (Burkholderia cepacia (strain AMMD)).